The sequence spans 198 residues: Recombination protein RecR (198 aa).

Residues 57–72 form a C4-type zinc finger; it reads CSVCGNLTDDDPCLIC. One can recognise a Toprim domain in the interval 80 to 175; that stretch reads SVILVVEDSK…KVTRLARGLA (96 aa).

It belongs to the RecR family.

Functionally, may play a role in DNA repair. It seems to be involved in an RecBC-independent recombinational process of DNA repair. It may act with RecF and RecO. The sequence is that of Recombination protein RecR from Streptococcus agalactiae serotype Ia (strain ATCC 27591 / A909 / CDC SS700).